A 204-amino-acid chain; its full sequence is Peptide deformylase (204 aa).

Positions 131 and 174 each coordinate Fe cation. The active site involves Glu175. His178 provides a ligand contact to Fe cation.

Belongs to the polypeptide deformylase family. Fe(2+) serves as cofactor.

The enzyme catalyses N-terminal N-formyl-L-methionyl-[peptide] + H2O = N-terminal L-methionyl-[peptide] + formate. Functionally, removes the formyl group from the N-terminal Met of newly synthesized proteins. Requires at least a dipeptide for an efficient rate of reaction. N-terminal L-methionine is a prerequisite for activity but the enzyme has broad specificity at other positions. In Streptococcus pyogenes serotype M49 (strain NZ131), this protein is Peptide deformylase.